Reading from the N-terminus, the 461-residue chain is UPF0210 protein Ddes_0622 (461 aa).

It belongs to the UPF0210 family. As to quaternary structure, homodimer.

In Desulfovibrio desulfuricans (strain ATCC 27774 / DSM 6949 / MB), this protein is UPF0210 protein Ddes_0622.